We begin with the raw amino-acid sequence, 339 residues long: tRNA-dihydrouridine(20/20a) synthase (339 aa).

Residues 26-28 and Gln-78 contribute to the FMN site; that span reads PML. The Proton donor role is filled by Cys-108. FMN-binding positions include Lys-147, His-180, 220 to 222, and 242 to 243; these read NGG and GR.

This sequence belongs to the Dus family. DusA subfamily. FMN serves as cofactor.

It catalyses the reaction 5,6-dihydrouridine(20) in tRNA + NADP(+) = uridine(20) in tRNA + NADPH + H(+). The catalysed reaction is 5,6-dihydrouridine(20) in tRNA + NAD(+) = uridine(20) in tRNA + NADH + H(+). It carries out the reaction 5,6-dihydrouridine(20a) in tRNA + NADP(+) = uridine(20a) in tRNA + NADPH + H(+). The enzyme catalyses 5,6-dihydrouridine(20a) in tRNA + NAD(+) = uridine(20a) in tRNA + NADH + H(+). In terms of biological role, catalyzes the synthesis of 5,6-dihydrouridine (D), a modified base found in the D-loop of most tRNAs, via the reduction of the C5-C6 double bond in target uridines. Specifically modifies U20 and U20a in tRNAs. The chain is tRNA-dihydrouridine(20/20a) synthase from Shigella flexneri.